Reading from the N-terminus, the 1400-residue chain is MNQEVMNLFNPQAPAQTFDSIRISIASPEKILSWSYGEIKKPETINYRTFKPERDGLFCARIFGPIKDYECLCGKYKRMKYKGIICEKCGVEVTLSRVRRERMGHIELAAPVAHIWFLKSLPSRIGTLLDMTLKDIERVLYFENYIVTEPGLTSLKEHQLLSEEEYMIAVDEFGEDQFTALIGAEAIYELLASMELEKIAADLRVDLAETTSDLKQKKLMKRLKIVENFLESGNRPEWMIMKIVPVIPPDLRPLVPLDGGRFATSDLNDLYRRVINRNNRLKRLIELRAPGIIIRNEKRMLQEAVDALFDNGRRGRVITGANKRPLKSLSDMLKGKQGRFRQNLLGKRVDYSGRSVIVTGPELKLHQCGLPKKMALELFKPFIYARLDAKGYSSTVKQAKKLVEKERPEVWDILDEVIREHPVLLNRAPTLHRLGIQAFEPTLIEGKAIQLHPLVCTAFNADFDGDQMAVHVPLSLEAQLEARVLMMSTNNILHPANGAPIIVPSQDMVLGLYYLSIVAEKEPGEGMIFADMGELQHALENKVVTLHTKIKGRFKTVDAEGNPVSKIYDTTPGRMIMGELLPKNVNVPFDICNQEMTKKNISKMIDHVYRHCGQKETVIFCDRIMQLGFAHACRAGISFGKDDMVIPESKAKIVAETEALTTEYEQQYNDGLITQGEKYNKVVDAWGKATDKITEEMMARLKAVEFDPVTGRQKQMNSVYMMSHSGARGSVNQMRQLGGMRGLMAKPSGEIIETPIISNFKEGLTVNEYFNSTHGARKGLADTALKTANSGYLTRRLVDVAQDAIISEVDCGAEIGLTMQPIVDAGQIVASIGQRVLGRTALDPILHPVTGEVIVEAGRMIEEKDVEIIEKAGIQSIRIRSALTCETRDGVCAKCYGRDLARGTPVNQGEAVGVIAAQSIGEPGTQLTMRTFHLGGTAQVVDSSYLEASYEGTVKLRNRNVVRNSDGNLVVMGRNMAVLILDATGKERAVHRVTYGSRLFVDEGDTVKRGQRIAEWDPYTRPIMTEVEGYVEFEDLVDGLSVSETADESTGITKRVVIDWRSTPRGSDLKPAMVIKDKAGKILKLSKGGDARFLLSVESILSVEPGAHVKAGDVIARLPMESAKTKDITGGLPRVAELFEARRPKDHAIIAEIDGTVRFGRDYKNKRRIIIEPNDDTIEPVEYLIPKGKPFHLQDGDVIEKGEYILDGNPAPHDILAIKGVEALASYLVNEIQEVYRLQGVLINDKHIEVIVRQMLQKVEITESGDTGYIPGDHVDRIELEEINERLIEEGKKPGSGNPVLLGITKASLQTPSFISAASFQETTRVLTEAAVAGKMDTLQGLKENVIVGRLIPAGTGGMTNQIRRIATARDELIIDERRKTSGSAEANAMLVDMTNNAAE.

The Zn(2+) site is built by cysteine 71, cysteine 73, cysteine 86, and cysteine 89. Mg(2+) contacts are provided by aspartate 462, aspartate 464, and aspartate 466. Positions 811, 885, 892, and 895 each coordinate Zn(2+).

The protein belongs to the RNA polymerase beta' chain family. In terms of assembly, the RNAP catalytic core consists of 2 alpha, 1 beta, 1 beta' and 1 omega subunit. When a sigma factor is associated with the core the holoenzyme is formed, which can initiate transcription. It depends on Mg(2+) as a cofactor. Zn(2+) serves as cofactor.

It carries out the reaction RNA(n) + a ribonucleoside 5'-triphosphate = RNA(n+1) + diphosphate. In terms of biological role, DNA-dependent RNA polymerase catalyzes the transcription of DNA into RNA using the four ribonucleoside triphosphates as substrates. This Brucella suis biovar 1 (strain 1330) protein is DNA-directed RNA polymerase subunit beta'.